A 303-amino-acid chain; its full sequence is Phosphate import ATP-binding protein PstB (303 aa).

Positions 56–298 constitute an ABC transporter domain; that stretch reads LSTSDVHVYY…PDHQLTEAYI (243 aa). 88–95 provides a ligand contact to ATP; sequence GPSGCGKS.

Belongs to the ABC transporter superfamily. Phosphate importer (TC 3.A.1.7) family. The complex is composed of two ATP-binding proteins (PstB), two transmembrane proteins (PstC and PstA) and a solute-binding protein (PstS).

Its subcellular location is the cell inner membrane. It carries out the reaction phosphate(out) + ATP + H2O = ADP + 2 phosphate(in) + H(+). Its function is as follows. Part of the ABC transporter complex PstSACB involved in phosphate import. Responsible for energy coupling to the transport system. The polypeptide is Phosphate import ATP-binding protein PstB (Acinetobacter baylyi (strain ATCC 33305 / BD413 / ADP1)).